The primary structure comprises 327 residues: GMP reductase (327 aa).

The active-site Thioimidate intermediate is the Cys-175. Ile-204 to Val-227 is an NADP(+) binding site.

The protein belongs to the IMPDH/GMPR family. GuaC type 2 subfamily.

The catalysed reaction is IMP + NH4(+) + NADP(+) = GMP + NADPH + 2 H(+). Catalyzes the irreversible NADPH-dependent deamination of GMP to IMP. It functions in the conversion of nucleobase, nucleoside and nucleotide derivatives of G to A nucleotides, and in maintaining the intracellular balance of A and G nucleotides. The sequence is that of GMP reductase from Lysinibacillus sphaericus (strain C3-41).